Reading from the N-terminus, the 238-residue chain is Ribitol-5-phosphate cytidylyltransferase (238 aa).

CTP contacts are provided by residues 7–10 (LAGG) and 81–87 (GDDRNHT).

This sequence belongs to the IspD/TarI cytidylyltransferase family. TarI subfamily.

It carries out the reaction D-ribitol 5-phosphate + CTP + H(+) = CDP-L-ribitol + diphosphate. It functions in the pathway cell wall biogenesis; poly(ribitol phosphate) teichoic acid biosynthesis. Functionally, catalyzes the transfer of the cytidylyl group of CTP to D-ribitol 5-phosphate. The chain is Ribitol-5-phosphate cytidylyltransferase from Staphylococcus epidermidis (strain ATCC 35984 / DSM 28319 / BCRC 17069 / CCUG 31568 / BM 3577 / RP62A).